Consider the following 239-residue polypeptide: Large ribosomal subunit protein uL2 (239 aa).

The disordered stretch occupies residues 203 to 239 (PFGGKEHHPGKPTTTSRRAPPGRKVGHIAARRTGRRK). Residues 222-239 (PPGRKVGHIAARRTGRRK) show a composition bias toward basic residues.

The protein belongs to the universal ribosomal protein uL2 family. In terms of assembly, part of the 50S ribosomal subunit. Forms a bridge to the 30S subunit in the 70S ribosome.

Functionally, one of the primary rRNA binding proteins. Required for association of the 30S and 50S subunits to form the 70S ribosome, for tRNA binding and peptide bond formation. It has been suggested to have peptidyltransferase activity; this is somewhat controversial. Makes several contacts with the 16S rRNA in the 70S ribosome. The sequence is that of Large ribosomal subunit protein uL2 from Pyrococcus abyssi (strain GE5 / Orsay).